Reading from the N-terminus, the 346-residue chain is Bifunctional phosphatase IMPL2, chloroplastic (346 aa).

The N-terminal 61 residues, 1 to 61 (MLAQSHFFSK…VSRRRFCLTM (61 aa)), are a transit peptide targeting the chloroplast. Residues Glu147, Asp165, and Asp168 each coordinate Mg(2+). A substrate-binding site is contributed by Glu147. Residues 167–170 (IDGT), 263–265 (GCD), Glu282, and Asp289 each bind substrate. Asp289 is a binding site for Mg(2+).

This sequence belongs to the inositol monophosphatase superfamily. Mg(2+) is required as a cofactor. As to expression, ubiquitous. High expression in roots. Expressed in pistil and seed endosperm.

Its subcellular location is the plastid. It localises to the chloroplast. The enzyme catalyses a myo-inositol phosphate + H2O = myo-inositol + phosphate. The catalysed reaction is L-histidinol phosphate + H2O = L-histidinol + phosphate. It catalyses the reaction beta-L-galactose 1-phosphate + H2O = L-galactose + phosphate. Its pathway is amino-acid biosynthesis; L-histidine biosynthesis; L-histidine from 5-phospho-alpha-D-ribose 1-diphosphate: step 8/9. It functions in the pathway polyol metabolism; myo-inositol biosynthesis; myo-inositol from D-glucose 6-phosphate: step 2/2. Functionally, phosphatase required for histidine production. Also acts on L-galactose 1-phosphate (L-Gal 1-P), D-myoinositol 3-phosphate (D-Ins 3-P) and D-myoinositol 1-phosphate (D-Ins 1-P). In Arabidopsis thaliana (Mouse-ear cress), this protein is Bifunctional phosphatase IMPL2, chloroplastic (HISN7).